The chain runs to 466 residues: Asparagine--tRNA ligase (466 aa).

This sequence belongs to the class-II aminoacyl-tRNA synthetase family. In terms of assembly, homodimer.

It localises to the cytoplasm. The catalysed reaction is tRNA(Asn) + L-asparagine + ATP = L-asparaginyl-tRNA(Asn) + AMP + diphosphate + H(+). The polypeptide is Asparagine--tRNA ligase (Shewanella pealeana (strain ATCC 700345 / ANG-SQ1)).